The sequence spans 212 residues: Pyrrolidone-carboxylate peptidase (212 aa).

Residues Glu-80, Cys-143, and His-165 contribute to the active site.

It belongs to the peptidase C15 family. Homotetramer.

The protein resides in the cytoplasm. It carries out the reaction Release of an N-terminal pyroglutamyl group from a polypeptide, the second amino acid generally not being Pro.. Removes 5-oxoproline from various penultimate amino acid residues except L-proline. This Aliivibrio fischeri (strain MJ11) (Vibrio fischeri) protein is Pyrrolidone-carboxylate peptidase.